A 346-amino-acid chain; its full sequence is MALKALLGLSQAQLETWAKDQGLPPFRGRQLHDWLYAKGARHWHDITVLPAALRQQEPLPLGRSNELERHLAQDGTLKLLLATDDGLSLETVGIPTRDRLTVCVSSQVGCPMACRFCATGKEGLQRSLEPHEIVDQVLTVREVMQRRPSHVVFMGMGEPLLNSDHVLTAIDCLSRDLGMAMRQITVSTVGVPNTLPRLAELALERLGRAQFTLAVSLHAPDQALREELIPTARAYPYEQLLEDCRHYVAISGRRVSFEYILLGNLNDSPRQAQALAEQVRGFQSHVNLIPYNPIAEEEFQRPEPARVDAFAAALKQRGVAVSVRASRGLDQNAACGQLRRQRQGGR.

Residue glutamate 90 is the Proton acceptor of the active site. The Radical SAM core domain occupies 96–330; it reads TRDRLTVCVS…VSVRASRGLD (235 aa). The cysteines at positions 103 and 335 are disulfide-linked. Residues cysteine 110, cysteine 114, and cysteine 117 each coordinate [4Fe-4S] cluster. Residues 157–158, serine 187, 216–218, and asparagine 292 contribute to the S-adenosyl-L-methionine site; these read GE and SLH. Cysteine 335 functions as the S-methylcysteine intermediate in the catalytic mechanism.

Belongs to the radical SAM superfamily. RlmN family. [4Fe-4S] cluster serves as cofactor.

The protein localises to the cytoplasm. It catalyses the reaction adenosine(2503) in 23S rRNA + 2 reduced [2Fe-2S]-[ferredoxin] + 2 S-adenosyl-L-methionine = 2-methyladenosine(2503) in 23S rRNA + 5'-deoxyadenosine + L-methionine + 2 oxidized [2Fe-2S]-[ferredoxin] + S-adenosyl-L-homocysteine. The enzyme catalyses adenosine(37) in tRNA + 2 reduced [2Fe-2S]-[ferredoxin] + 2 S-adenosyl-L-methionine = 2-methyladenosine(37) in tRNA + 5'-deoxyadenosine + L-methionine + 2 oxidized [2Fe-2S]-[ferredoxin] + S-adenosyl-L-homocysteine. In terms of biological role, specifically methylates position 2 of adenine 2503 in 23S rRNA and position 2 of adenine 37 in tRNAs. The polypeptide is Probable dual-specificity RNA methyltransferase RlmN (Synechococcus sp. (strain RCC307)).